Consider the following 369-residue polypeptide: Probable L-tyrosine/L-aspartate decarboxylase (369 aa).

Lysine 224 is subject to N6-(pyridoxal phosphate)lysine.

This sequence belongs to the group II decarboxylase family. MfnA subfamily. Requires pyridoxal 5'-phosphate as cofactor.

It carries out the reaction L-tyrosine + H(+) = tyramine + CO2. The enzyme catalyses L-aspartate + H(+) = beta-alanine + CO2. The protein operates within cofactor biosynthesis; methanofuran biosynthesis. It participates in cofactor biosynthesis; coenzyme A biosynthesis. Functionally, catalyzes the decarboxylation of L-tyrosine to produce tyramine for methanofuran biosynthesis. Can also catalyze the decarboxylation of L-aspartate to produce beta-alanine for coenzyme A (CoA) biosynthesis. This is Probable L-tyrosine/L-aspartate decarboxylase from Methanospirillum hungatei JF-1 (strain ATCC 27890 / DSM 864 / NBRC 100397 / JF-1).